The chain runs to 273 residues: Pyrroline-5-carboxylate reductase (273 aa).

Belongs to the pyrroline-5-carboxylate reductase family.

The protein localises to the cytoplasm. It carries out the reaction L-proline + NADP(+) = (S)-1-pyrroline-5-carboxylate + NADPH + 2 H(+). It catalyses the reaction L-proline + NAD(+) = (S)-1-pyrroline-5-carboxylate + NADH + 2 H(+). Its pathway is amino-acid biosynthesis; L-proline biosynthesis; L-proline from L-glutamate 5-semialdehyde: step 1/1. Its function is as follows. Catalyzes the reduction of 1-pyrroline-5-carboxylate (PCA) to L-proline. The sequence is that of Pyrroline-5-carboxylate reductase from Pseudomonas aeruginosa (strain ATCC 15692 / DSM 22644 / CIP 104116 / JCM 14847 / LMG 12228 / 1C / PRS 101 / PAO1).